The chain runs to 3013 residues: MNLHQVLTGAVNPGDHCFAVGSVGEQRFTAYASGCDIVILGSNFERLQIIPGAKHGNIQVGCVDCSMQQGKIAASYGNVISVFEPVSLPKKRKNLEFYSQWQKSGQFFLDSIAHNITWDPAGNRLLTGSSCLQLWCNSRKQTEDENPDKTDLNFGNWMCIWHCKTASQVHLMKFSPDGEFFATAGKDDCLLKVWYNVENWRPAVTSPDKNSEKQSQGEIDFSFVYLAHPRAVNGFSWRKTSKYMPRASVCNVLLTCCKDNVCRLWVETFLPNDCFLYGSDCNHWCEPVSLTNNLKRNASSKDRVQSALEVNLRPFRRGRSRSLALVAHTGYLPHQQDPHHAHRNTPLHANALCHFHIAASINPATDIPLLPSITSLSLNENEEKCGPFVVHWLNNKELHFTLSMEVFLQQLRKSFEQPSSEASVEDSIQADLKSDEELDDGVDDLKINHEKKELDEDKMLPSSSFTPLSSAAVDHQIEVLLSEWSKNADMLFSIHPMDGSLLVWHVDWLDEYQPGMFRQVQVSFVSRIPVAFPTGDANSLCKSIVMYACTKNVDLAIQQGKQRPTGLTRSTSMLISSAHSKSSNNLKLSIFTPNVMMISKHADGSLNQWLVSFAEESAFSTVLSISHKSRYCGHRFHLNDLACHSVLPLLLTTSHHNALRTPNVGNQKQAHDAVNTEECSLAQQNKSNVDMAFQDPNAIYSELILWRVDPVGPLSFSGGVSELARINSLHVSAFSNVAWLPTLIPSYCLGAYCNSPSACFVASDGQYLRLYEAVIDAKKLLYELSNPEISKYVGEVFNIVSQQSTARPGCIIALDSITKLHGRKTQLLHVFQEDFILNNLEKKRLGVDNILLDSDSSCNGFSEKFYLVVIECTEDNRSLLRMWDLHLRSTPVSLDERIDTKISEASWLPEEHYSSSPEKILSPFSQKFQACRANLQSTSKLSLFSEMVYSKELDLPEGVEIISVKPSAGHLSSSSIYPVCSAPYLLATSCSDDKVRFWRCRVTNGESATSKNGKLDVVYVWEEWPLLIEDGLENNSSVTVPGRPVEVSCAHTSRLAVAYKQPTGNSRSQEFVMHVSIFECESTGGSCWILEQTIHLDELSTVLDSGISIDSNLVAYNKQETYLVSKESITSNTKHLVHLDWMSREDGSHILTVGIGSKLFMYGPMAGKVQDQTGKENQAFPLWDSTKIVPLSKFVLLRSVDLVSSVEGAPPFPVSLSWVRDGILVVGMDCEMHVYSQWQPSNKQEPVISESYNGSTPSILSLIKQSNSSSSGLHPPKKTLTRSMTSLAQKICGKKSIFDPSVDMEDSGLFEAAHVLSPTLPQYHPLQLLELMDLGKVRRAKAILSHLVKCIAGEVVALNEAESNHERRLRSLTISASGSTTRDPQAFNKADSRDYTEIDSVPPLPLYALLAADDDSYCSSLEKTGSESSLKKSKQLSKESYDELFQTSVLMSDNHMLETDEENTQPRVIDLSQYSPTYFGPEHAQVLSGHLLHSSLPGLTRMEQMSLMALADTIATTSTDIGESRDRNQGGETLDECGLKFLLAVRLHTFLTTSLPAYRAQLLHQGLSTGHFAWAFHSVAEEELLNMLPAMQKDDPTWSELRAMGVGWWVRNARILRRCIEKVAKAAFHRNNDPLDAAIFYLAMKKKAVIWGLYRSQKDTKMTQFFGHNFEEERWRKAALKNAFSLLGKQRFEHSAAFFLLGGCLKDAIEVCLEKLNDIQLALVIARLFESEFDKSATYKSILRKKVLGIGSPASELSSSSINAHHDPFLRSMAHWILEDYSAALETLIKQPVTEDEDQVMMSACNPIVFNFYNYLRTHPLLLRRHFGSSSETFSTHMTLAGKSGLAGTINLSERRLFFTTASAHLKAGCPMLALEVLSKMPKVSKKAKPCCRGSSFLTSKDSSLKLDVREDKCCAADWSPSLTNGLESSSEGSSERHSHSTLSFDWSQPSVVFQDDSLELKWDSDNDEENEDPPISMKEIRPLQRKTVKEIDELSSYTDSLSTLDENDILNPSEDIIAVQLKFRACLKILTVELRTLSTGYEIDGGKLRYQLYHWLEKEVVALQRTCDFCSDADQLQTTFSQSADESGSTEDADDLHHQTKVKQLRESFQEKRQWLLKYQSLLRMFLSYCVLHGSHGGGLASVRMELILLLQESQQETAEPIFSNPLSEQTSVPLLFACTASAKTVVANPLLHLSNLTHDILHAIINFDSPPHPDSQTNKVYVMHTLAASLSACIYQCLCGSHNYSSFQTNQFTGMVYQTVLLAHRHSLRTGSLDESVTPNTSPAQWPGINFLIQLLNSSGEEAQSGLTVLLCEILTAVYLSLFIHGLATHSSNELFRIVAHPLNEKMWSAVFGGGAHVPSKGQANSKALSVEGEKQNRHISPSKVSARESPVSSSSGNQEPPAVKEKFVPPELSIWDYFIAKPFLPPSQSRAEYDSEESLESDDEEEEDDDDALPSGLQLHEHSNSNSFSWSLMRLAMVQLVLNNLKTFYPFAGHDLAELPVSSPLCHAVLKTLQCWEQVLLRRLEIHGGPPQNYISSHTSEENVSAGPAILRHKALLEPTNTPFKSKNHLALSVKRLWQYLVKQEEIQETFIRNIFTKKRCLNEIEADLGYPGGKARIIHKESDIITAFAVNRANRNCIAIASSHDVQELDVSAILATQIYTWVDDDTETETKGSEDFLVIHARDDLSAVQGSTPYTHSNPGTPINMPWLGSTQTGRGASVMLKKAINNVRRMTSHPTLPYYLTGAQDGSVRMFEWGHSQQITCFRSGGNSRITRMRFNYQGNKFGIVDADGYLSLYQTNWKCCPVTGSMPKPYLAWQCHNKTANDFVFVSSSSLIATAGLSSDNRNICLWDTLVAPANSLVHAFTCHDSGATVLAYAPKHQLLISGGRKGFTCIFDLRQRQQRQLFQSHDSPVKAIAIDPTEEYFVTGSAEGNIKIWSLSSFSLLHTFINEHARQSIFRNIGTGVMQIETGPANHIFSCGADGTMKMRILPDQFSPLNEVLKNDVKFML.

WD repeat units lie at residues 108-145, 164-204, and 227-275; these read FLDS…TEDE, KTAS…RPAV, and AHPR…NDCF. Residues Ser-322, Ser-420, Ser-423, and Ser-434 each carry the phosphoserine modification. Residues 418-442 form a disordered region; the sequence is PSSEASVEDSIQADLKSDEELDDGV. The stretch at 474-514 is one WD 4 repeat; that stretch reads DHQIEVLLSEWSKNADMLFSIHPMDGSLLVWHVDWLDEYQP. Residue Ser-572 is modified to Phosphoserine. WD repeat units lie at residues 578–619 and 842–893; these read AHSK…ESAF and KKRL…TPVS. Phosphoserine is present on residues Ser-916 and Ser-922. WD repeat units lie at residues 970–1008, 1145–1193, and 1208–1248; these read HLSS…GESA, EDGS…PLSK, and GAPP…EPVI. A phosphoserine mark is found at Ser-1829, Ser-1896, Ser-1903, and Ser-1965. 2 disordered regions span residues 2364–2406 and 2431–2462; these read GQAN…PPAV and QSRA…GLQL. Residues 2385–2398 show a composition bias toward low complexity; the sequence is SKVSARESPVSSSS. Positions 2437 to 2455 are enriched in acidic residues; that stretch reads DSEESLESDDEEEEDDDDA. 6 WD repeats span residues 2728–2769, 2771–2810, 2822–2864, 2870–2909, 2912–2951, and 2964–3002; these read KAIN…TCFR, GGNS…CPVT, CHNK…ANSL, CHDS…QRQL, SHDS…LLHT, and NIGT…SPLN.

This Mus musculus (Mouse) protein is DmX-like protein 1 (Dmxl1).